Reading from the N-terminus, the 210-residue chain is MISFLDKAVLQFDRALQTLVPHAAKATRPSPANTLEEAELDQVERKHSSGLMRINHTGEVCAQALYAGQATTAKLATVRQEMEHAADEEIDHLVWCEQRLYDLGSKPSILNPLFYGASFMIGAGAGFISDKLSLGFVAATEDQVCIHLQKHMAALPMQDAKSKAVLTQMHIDEAKHKAMALEAGGYEFPQPIMAIMTQVSKVMTITTYRI.

Fe cation is bound by residues E59, E89, H92, E141, E173, and H176.

Belongs to the COQ7 family. Fe cation is required as a cofactor.

The protein resides in the cell membrane. It catalyses the reaction a 5-methoxy-2-methyl-3-(all-trans-polyprenyl)benzene-1,4-diol + AH2 + O2 = a 3-demethylubiquinol + A + H2O. Its pathway is cofactor biosynthesis; ubiquinone biosynthesis. Catalyzes the hydroxylation of 2-nonaprenyl-3-methyl-6-methoxy-1,4-benzoquinol during ubiquinone biosynthesis. In Marinomonas sp. (strain MWYL1), this protein is 3-demethoxyubiquinol 3-hydroxylase.